Reading from the N-terminus, the 85-residue chain is Probable oxaloacetate decarboxylase gamma chain (85 aa).

A helical transmembrane segment spans residues 11-33 (AAALMVTGMGVVFIFLTILIFLV).

This sequence belongs to the OadG family. In terms of assembly, heterotrimer of an alpha, a beta and a gamma subunit. Na(+) is required as a cofactor.

Its subcellular location is the cell membrane. The catalysed reaction is oxaloacetate + 2 Na(+)(in) + H(+) = pyruvate + 2 Na(+)(out) + CO2. Catalyzes the decarboxylation of oxaloacetate coupled to Na(+) translocation. The polypeptide is Probable oxaloacetate decarboxylase gamma chain (Vibrio vulnificus (strain CMCP6)).